The sequence spans 238 residues: Ribonuclease PH (238 aa).

Phosphate-binding positions include Arg86 and 124-126 (GTR).

This sequence belongs to the RNase PH family. In terms of assembly, homohexameric ring arranged as a trimer of dimers.

The enzyme catalyses tRNA(n+1) + phosphate = tRNA(n) + a ribonucleoside 5'-diphosphate. Functionally, phosphorolytic 3'-5' exoribonuclease that plays an important role in tRNA 3'-end maturation. Removes nucleotide residues following the 3'-CCA terminus of tRNAs; can also add nucleotides to the ends of RNA molecules by using nucleoside diphosphates as substrates, but this may not be physiologically important. Probably plays a role in initiation of 16S rRNA degradation (leading to ribosome degradation) during starvation. The polypeptide is Ribonuclease PH (Caulobacter vibrioides (strain ATCC 19089 / CIP 103742 / CB 15) (Caulobacter crescentus)).